Reading from the N-terminus, the 142-residue chain is MLMPRRVKYRKQQRGRMKGKAKGGTLVQFGEWGLKALEPAWITAQQIEACRIAMMRVMKRAGKIWIRIFPDKPYTKKPAESRMGKGKGNVEGWVAVVKPGKILFEIAGVDEETAHEALRYAASKLPIATKVVPRHHIGGEAV.

This sequence belongs to the universal ribosomal protein uL16 family. As to quaternary structure, part of the 50S ribosomal subunit.

Binds 23S rRNA and is also seen to make contacts with the A and possibly P site tRNAs. The protein is Large ribosomal subunit protein uL16 of Thermotoga neapolitana (strain ATCC 49049 / DSM 4359 / NBRC 107923 / NS-E).